A 362-amino-acid chain; its full sequence is 3-isopropylmalate dehydrogenase (362 aa).

78–91 (GYKWDSLPPHQRPE) serves as a coordination point for NAD(+). Substrate contacts are provided by Arg-98, Arg-108, Arg-136, and Asp-226. Mg(2+) contacts are provided by Asp-226, Asp-250, and Asp-254. 284–296 (GSAPDIAGLDKAN) serves as a coordination point for NAD(+).

Belongs to the isocitrate and isopropylmalate dehydrogenases family. LeuB type 1 subfamily. As to quaternary structure, homodimer. The cofactor is Mg(2+). Requires Mn(2+) as cofactor.

It localises to the cytoplasm. It catalyses the reaction (2R,3S)-3-isopropylmalate + NAD(+) = 4-methyl-2-oxopentanoate + CO2 + NADH. Its pathway is amino-acid biosynthesis; L-leucine biosynthesis; L-leucine from 3-methyl-2-oxobutanoate: step 3/4. Its function is as follows. Catalyzes the oxidation of 3-carboxy-2-hydroxy-4-methylpentanoate (3-isopropylmalate) to 3-carboxy-4-methyl-2-oxopentanoate. The product decarboxylates to 4-methyl-2 oxopentanoate. The sequence is that of 3-isopropylmalate dehydrogenase from Trichormus variabilis (strain ATCC 29413 / PCC 7937) (Anabaena variabilis).